The primary structure comprises 396 residues: Ribosomal RNA large subunit methyltransferase I (396 aa).

Positions 2–81 (TVRLILAKGR…EVIDCAFFIR (80 aa)) constitute a PUA domain.

The protein belongs to the methyltransferase superfamily. RlmI family.

Its subcellular location is the cytoplasm. The catalysed reaction is cytidine(1962) in 23S rRNA + S-adenosyl-L-methionine = 5-methylcytidine(1962) in 23S rRNA + S-adenosyl-L-homocysteine + H(+). Functionally, specifically methylates the cytosine at position 1962 (m5C1962) of 23S rRNA. In Yersinia pestis bv. Antiqua (strain Antiqua), this protein is Ribosomal RNA large subunit methyltransferase I.